Here is a 296-residue protein sequence, read N- to C-terminus: Gamma-D-glutamyl-L-lysine dipeptidyl-peptidase (296 aa).

Residues Tyr90, 199–201 (DCS), and 218–219 (DA) each bind substrate. A NlpC/P60 domain is found at 170–295 (KGTAEDIIQT…ELCAVRRCFS (126 aa)). The active-site Nucleophile is Cys200. Catalysis depends on His253, which acts as the Proton acceptor. Residue His265 is part of the active site.

The protein belongs to the peptidase C40 family.

It carries out the reaction The enzyme releases L-Ala-gamma-D-Glu dipeptides from cell wall peptides via cleavage of an L-Ala-gamma-D-Glu-|-L-Lys bond.. It participates in cell wall degradation; peptidoglycan degradation. Functionally, specifically hydrolyzes gamma-D-glutamyl-L-lysine bonds in murein peptides, releasing L-Ala-D-Glu. The polypeptide is Gamma-D-glutamyl-L-lysine dipeptidyl-peptidase (ykfC) (Bacillus subtilis (strain 168)).